A 391-amino-acid polypeptide reads, in one-letter code: MKCVVFTGGGTGGHIFPGLAVAEALSSSLECRIVWIGSAKGVDRKIVESSELYSASPSVLEFIGIPAGKLRRYFSFQNFIDVFKVAAGFIKSFFILLKLKPVFVFSKGGFVSVPPCAAAKFLKIPVITHECDFSPGLATRINSKFANRILVSYQETAELLPASLRSKVICTGNPVRLSFYSGRPEKGRSFLNIKSNLPVLFVLGGSLGARQLNDLISDSIEYLVKHFVVVHQIGEANMDQGQKIKEGLLKSSPEFAENYKPYPFIKKEMADVLSLSSIVVSRAGANTVWESAAAGKPMILVPLEKGSSRGDQIENAEFFKKKGSAEILLGEDVRPDIFIRLLRDLGFEENISGNERLKNMAQASAALAGEKPALVIADFLKSFFTSKNEDL.

UDP-N-acetyl-alpha-D-glucosamine contacts are provided by residues 11–13 (TGG), R176, S206, and Q312.

It belongs to the glycosyltransferase 28 family. MurG subfamily.

The protein resides in the cell inner membrane. It carries out the reaction di-trans,octa-cis-undecaprenyl diphospho-N-acetyl-alpha-D-muramoyl-L-alanyl-D-glutamyl-meso-2,6-diaminopimeloyl-D-alanyl-D-alanine + UDP-N-acetyl-alpha-D-glucosamine = di-trans,octa-cis-undecaprenyl diphospho-[N-acetyl-alpha-D-glucosaminyl-(1-&gt;4)]-N-acetyl-alpha-D-muramoyl-L-alanyl-D-glutamyl-meso-2,6-diaminopimeloyl-D-alanyl-D-alanine + UDP + H(+). It functions in the pathway cell wall biogenesis; peptidoglycan biosynthesis. Cell wall formation. Catalyzes the transfer of a GlcNAc subunit on undecaprenyl-pyrophosphoryl-MurNAc-pentapeptide (lipid intermediate I) to form undecaprenyl-pyrophosphoryl-MurNAc-(pentapeptide)GlcNAc (lipid intermediate II). The protein is UDP-N-acetylglucosamine--N-acetylmuramyl-(pentapeptide) pyrophosphoryl-undecaprenol N-acetylglucosamine transferase of Treponema denticola (strain ATCC 35405 / DSM 14222 / CIP 103919 / JCM 8153 / KCTC 15104).